The primary structure comprises 179 residues: Natural killer cells antigen CD94 (179 aa).

Residues 1-10 (MAVSQTTLWN) lie on the Cytoplasmic side of the membrane. Residues 11–31 (LISGILGVICLLLMTTMGILL) form a helical; Signal-anchor for type II membrane protein membrane-spanning segment. Over 32-179 (KNLLLTESIQ…SRFICKQELM (148 aa)) the chain is Extracellular. 4 disulfides stabilise this stretch: Cys-58-Cys-70, Cys-61-Cys-72, Cys-89-Cys-174, and Cys-152-Cys-166. The C-type lectin domain maps to 68–175 (HQCNCYLFFD…CEDKSRFICK (108 aa)). Asn-93 and Asn-125 each carry an N-linked (GlcNAc...) asparagine glycan.

In terms of assembly, can form disulfide-bonded heterodimer with NKG2 family members KLRC1 and KLRC2. KLRD1-KLRC1 heterodimer interacts with peptide-bound MHC-E-B2M heterotrimeric complex. KLRD1 plays a prominent role in directly interacting with MHC-E. KLRD1-KLRC1 interacts with much higher affinity with peptide-bound MHC-E-B2M than KLRD1-KLRC2. Interacts with the adapter protein TYROBP/DAP12; this interaction is required for cell surface expression and cell activation.

The protein resides in the cell membrane. In terms of biological role, immune receptor involved in self-nonself discrimination. In complex with KLRC1 or KLRC2 on cytotoxic and regulatory lymphocyte subsets, recognizes non-classical major histocompatibility (MHC) class Ib molecule MHC-E loaded with self-peptides derived from the signal sequence of classical MHC class Ia and non-classical MHC class Ib molecules. Enables cytotoxic cells to monitor the expression of MHC class I molecules in healthy cells and to tolerate self. Primarily functions as a ligand binding subunit as it lacks the capacity to signal. Its function is as follows. KLRD1-KLRC1 acts as an immune inhibitory receptor. Key inhibitory receptor on natural killer (NK) cells that regulates their activation and effector functions. Dominantly counteracts T cell receptor signaling on a subset of memory/effector CD8-positive T cells as part of an antigen-driven response to avoid autoimmunity. On intraepithelial CD8-positive gamma-delta regulatory T cells triggers TGFB1 secretion, which in turn limits the cytotoxic programming of intraepithelial CD8-positive alpha-beta T cells, distinguishing harmless from pathogenic antigens. In MHC-E-rich tumor microenvironment, acts as an immune inhibitory checkpoint and may contribute to progressive loss of effector functions of NK cells and tumor-specific T cells, a state known as cell exhaustion. Upon MHC-E-peptide binding, transmits intracellular signals through KLRC1 immunoreceptor tyrosine-based inhibition motifs (ITIMs) by recruiting INPP5D/SHIP-1 and INPPL1/SHIP-2 tyrosine phosphatases to ITIMs, and ultimately opposing signals transmitted by activating receptors through dephosphorylation of proximal signaling molecules. Functionally, KLRD1-KLRC2 acts as an immune activating receptor. On cytotoxic lymphocyte subsets recognizes MHC-E loaded with signal sequence-derived peptides from non-classical MHC class Ib MHC-G molecules, likely playing a role in the generation and effector functions of adaptive NK cells and in maternal-fetal tolerance during pregnancy. Regulates the effector functions of terminally differentiated cytotoxic lymphocyte subsets, and in particular may play a role in adaptive NK cell response to viral infection. Upon MHC-E-peptide binding, transmits intracellular signals via the adapter protein TYROBP/DAP12, triggering the phosphorylation of proximal signaling molecules and cell activation. The polypeptide is Natural killer cells antigen CD94 (KLRD1) (Canis lupus familiaris (Dog)).